The primary structure comprises 620 residues: Cryptochrome-1 (620 aa).

The 130-residue stretch at 3–132 folds into the Photolyase/cryptochrome alpha/beta domain; sequence VNAVHWFRKG…EVIVRISHTL (130 aa). 3 short sequence motifs (LIR) span residues 50 to 54, 82 to 87, and 151 to 156; these read NRWRF, DVFPRL, and KRFQTL. Ser-252 is an FAD binding site. 4 short sequence motifs (LIR) span residues 255–260, 271–276, 285–290, and 335–339; these read LRFGCL, DLYKKV, SLYGQL, and TGFPW. FAD is bound at residue Gln-289. FAD is bound at residue His-355. The short motif at 379-384 is the LIR 8 element; that stretch reads KVFEEL. 387–389 provides a ligand contact to FAD; that stretch reads DAD. 5 consecutive short sequence motifs (LIR) follow at residues 395 to 400, 411 to 416, 430 to 435, 486 to 491, and 492 to 497; these read GSWMWL, HCYCPV, RRYLPV, QIYQQL, and SRYRGL. The tract at residues 592–620 is disordered; sequence GTGISAGKRPNPEEETQSVGPKVQRQSTN.

Belongs to the DNA photolyase class-1 family. As to quaternary structure, component of the circadian core oscillator, which includes the CRY proteins, CLOCK or NPAS2, BMAL1 or BMAL2, CSNK1E, and the PER proteins. FAD is required as a cofactor. The cofactor is (6R)-5,10-methylene-5,6,7,8-tetrahydrofolate. In terms of tissue distribution, expressed in the retina. High levels found in ganglion cells of the retina.

The protein resides in the cytoplasm. The protein localises to the nucleus. In terms of biological role, transcriptional repressor which forms a core component of the circadian clock. The circadian clock, an internal time-keeping system, regulates various physiological processes through the generation of approximately 24 hour circadian rhythms in gene expression, which are translated into rhythms in metabolism and behavior. It is derived from the Latin roots 'circa' (about) and 'diem' (day) and acts as an important regulator of a wide array of physiological functions including metabolism, sleep, body temperature, blood pressure, endocrine, immune, cardiovascular, and renal function. Consists of two major components: the central clock, residing in the suprachiasmatic nucleus (SCN) of the brain, and the peripheral clocks that are present in nearly every tissue and organ system. Both the central and peripheral clocks can be reset by environmental cues, also known as Zeitgebers (German for 'timegivers'). The predominant Zeitgeber for the central clock is light, which is sensed by retina and signals directly to the SCN. The central clock entrains the peripheral clocks through neuronal and hormonal signals, body temperature and feeding-related cues, aligning all clocks with the external light/dark cycle. Circadian rhythms allow an organism to achieve temporal homeostasis with its environment at the molecular level by regulating gene expression to create a peak of protein expression once every 24 hours to control when a particular physiological process is most active with respect to the solar day. Transcription and translation of core clock components (CLOCK, NPAS2, BMAL1, BMAL2, PER1, PER2, PER3, CRY1 and CRY2) plays a critical role in rhythm generation, whereas delays imposed by post-translational modifications (PTMs) are important for determining the period (tau) of the rhythms (tau refers to the period of a rhythm and is the length, in time, of one complete cycle). A diurnal rhythm is synchronized with the day/night cycle, while the ultradian and infradian rhythms have a period shorter and longer than 24 hours, respectively. Disruptions in the circadian rhythms contribute to the pathology of cardiovascular diseases, cancer, metabolic syndromes and aging. A transcription/translation feedback loop (TTFL) forms the core of the molecular circadian clock mechanism. Transcription factors, CLOCK or NPAS2 and BMAL1 or BMAL2, form the positive limb of the feedback loop, act in the form of a heterodimer and activate the transcription of core clock genes and clock-controlled genes (involved in key metabolic processes), harboring E-box elements (5'-CACGTG-3') within their promoters. The core clock genes: PER1/2/3 and CRY1/2 which are transcriptional repressors form the negative limb of the feedback loop and interact with the CLOCK|NPAS2-BMAL1|BMAL2 heterodimer inhibiting its activity and thereby negatively regulating their own expression. This heterodimer also activates nuclear receptors NR1D1, NR1D2, RORA, RORB and RORG, which form a second feedback loop and which activate and repress BMAL1 transcription, respectively. CRY1 and CRY2 have redundant functions but also differential and selective contributions at least in defining the pace of the SCN circadian clock and its circadian transcriptional outputs. More potent transcriptional repressor in cerebellum and liver than CRY2, though more effective in lengthening the period of the SCN oscillator. On its side, CRY2 seems to play a critical role in tuning SCN circadian period by opposing the action of CRY1. With CRY2, is dispensable for circadian rhythm generation but necessary for the development of intercellular networks for rhythm synchrony. Capable of translocating circadian clock core proteins such as PER proteins to the nucleus. Interacts with CLOCK:BMAL1 independently of PER proteins and is found at CLOCK:BMAL1-bound sites, suggesting that CRY may act as a molecular gatekeeper to maintain CLOCK:BMAL1 in a poised and repressed state until the proper time for transcriptional activation. This chain is Cryptochrome-1 (CRY1), found in Sylvia borin (Garden warbler).